A 309-amino-acid chain; its full sequence is Aspartate carbamoyltransferase catalytic subunit (309 aa).

The carbamoyl phosphate site is built by arginine 57 and threonine 58. Position 86 (lysine 86) interacts with L-aspartate. Arginine 107, histidine 135, and glutamine 138 together coordinate carbamoyl phosphate. Arginine 168 and arginine 228 together coordinate L-aspartate. Positions 267 and 268 each coordinate carbamoyl phosphate.

The protein belongs to the aspartate/ornithine carbamoyltransferase superfamily. ATCase family. As to quaternary structure, heterooligomer of catalytic and regulatory chains.

The enzyme catalyses carbamoyl phosphate + L-aspartate = N-carbamoyl-L-aspartate + phosphate + H(+). The protein operates within pyrimidine metabolism; UMP biosynthesis via de novo pathway; (S)-dihydroorotate from bicarbonate: step 2/3. Catalyzes the condensation of carbamoyl phosphate and aspartate to form carbamoyl aspartate and inorganic phosphate, the committed step in the de novo pyrimidine nucleotide biosynthesis pathway. In Nitrosopumilus maritimus (strain SCM1), this protein is Aspartate carbamoyltransferase catalytic subunit.